Here is a 185-residue protein sequence, read N- to C-terminus: DNA-directed RNA polymerase 22 kDa subunit (185 aa).

It belongs to the poxviridae DNA-directed RNA polymerase 22 kDa subunit family. The DNA-dependent RNA polymerase used for intermediate and late genes expression consists of eight subunits Rpo30/OPG66, Rpo7/OPG90, Rpo22/OPG103, Rpo147/OPG105, Rpo18/OPG119, Rpo19/OPG131, Rpo132/OPG151 and Rpo35/OPG156. The same holoenzyme, with the addition of the transcription-specificity factor OPG109, is used for early gene expression.

The protein localises to the virion. It carries out the reaction RNA(n) + a ribonucleoside 5'-triphosphate = RNA(n+1) + diphosphate. Functionally, part of the DNA-dependent RNA polymerase which catalyzes the transcription of viral DNA into RNA using the four ribonucleoside triphosphates as substrates. Responsible for the transcription of early, intermediate and late genes. DNA-dependent RNA polymerase associates with the early transcription factor (ETF), itself composed of OPG118 and OPG133, thereby allowing the early genes transcription. Late transcription, and probably also intermediate transcription, require newly synthesized RNA polymerase. The chain is DNA-directed RNA polymerase 22 kDa subunit (OPG103) from Variola virus (isolate Human/India/Ind3/1967) (VARV).